The sequence spans 165 residues: Cysteine and tyrosine-rich protein 1 (165 aa).

A signal peptide spans 1–29 (MDALRLPRRLGVLLWKVVLLFVYAEDCRA). The Extracellular segment spans residues 30–61 (QCGKDCRAYCCNGSTPHCCSYYAYIGSILSGT). Residues 62–82 (AIAGIVFGIVFIMGVIAGIAI) form a helical membrane-spanning segment. Over 83–165 (CICMCMKNNR…SSSQNRICNN (83 aa)) the chain is Cytoplasmic. The segment at 127–165 (DLPPPYSPAPQASAQRSPPPPYPGNSRKYSSSQNRICNN) is disordered. A compositionally biased stretch (polar residues) spans 153-165 (RKYSSSQNRICNN).

The protein belongs to the CYYR1 family.

The protein resides in the membrane. In Rattus norvegicus (Rat), this protein is Cysteine and tyrosine-rich protein 1 (Cyyr1).